The sequence spans 813 residues: Fibroblast growth factor receptor 2 (813 aa).

A signal peptide spans 1-14 (MLLLALLAFLLVSR). Residues 18 to 367 (RPSYSMVDDT…EDNPVPYYME (350 aa)) lie on the Extracellular side of the membrane. The Ig-like C2-type 1 domain occupies 21–117 (YSMVDDTTPE…NSHFFHVNVT (97 aa)). C58 and C103 are oxidised to a cystine. 2 N-linked (GlcNAc...) asparagine glycosylation sites follow: N79 and N115. The tract at residues 119–143 (ASSSGDDEDDNDGSEDFTNDNNNIR) is disordered. Over residues 123–136 (GDDEDDNDGSEDFT) the composition is skewed to acidic residues. 2 Ig-like C2-type domains span residues 145 to 237 (PYWT…YHLD) and 246 to 348 (PILQ…AWLT). Positions 152 to 169 (KMEKKLHAVSAANTVKLR) are heparin-binding. C170 and C221 are disulfide-bonded. Residues N231, N255, N287, N308, and N321 are each glycosylated (N-linked (GlcNAc...) asparagine). An intrachain disulfide couples C268 to C332. Residues 368 to 388 (IGIYSTGIFIIFCMVVVCVVC) traverse the membrane as a helical segment. Over 389–813 (RMRQGAKKKK…FQHVNGVVKT (425 aa)) the chain is Cytoplasmic. Phosphotyrosine; by autocatalysis is present on Y456. The Protein kinase domain maps to 471–760 (LTLGKPLGEG…LTLTTNEEYL (290 aa)). ATP is bound by residues 477–485 (LGEGCFGQV), K507, 555–557 (EYA), and N561. Y576 is subject to Phosphotyrosine; by autocatalysis. D616 functions as the Proton acceptor in the catalytic mechanism. Residues Y646, Y647, and Y759 each carry the phosphotyrosine; by autocatalysis modification. Residues 771–792 (PSFPDSSCSASSSSGDDSVFSP) are compositionally biased toward low complexity. The disordered stretch occupies residues 771 to 801 (PSFPDSSCSASSSSGDDSVFSPDPMPHDPCL).

Belongs to the protein kinase superfamily. Tyr protein kinase family. Fibroblast growth factor receptor subfamily. As to quaternary structure, monomer. Homodimer after ligand binding. Post-translationally, autophosphorylated. Binding of FGF family members together with heparan sulfate proteoglycan or heparin promotes receptor dimerization and autophosphorylation on tyrosine residues. Autophosphorylation occurs in trans between the two FGFR molecules present in the dimer. In terms of processing, N-glycosylated in the endoplasmic reticulum. The N-glycan chains undergo further maturation to an Endo H-resistant form in the Golgi apparatus. Ubiquitinated. FGFR2 is rapidly ubiquitinated after autophosphorylation, leading to internalization and degradation. Subject to degradation both in lysosomes and by the proteasome. In terms of tissue distribution, expressed in the anterior neural plate in early neurula stage embryos. Later in development, the protein is also expressed in the eye anlagen, midbrain-hindbrain boundary and otic vesicle.

It is found in the cell membrane. It localises to the golgi apparatus. The protein localises to the cytoplasmic vesicle. It carries out the reaction L-tyrosyl-[protein] + ATP = O-phospho-L-tyrosyl-[protein] + ADP + H(+). With respect to regulation, present in an inactive conformation in the absence of bound ligand. Ligand binding leads to dimerization and activation by autophosphorylation on tyrosine residues. Tyrosine-protein kinase that acts as a cell-surface receptor for fibroblast growth factors and plays an essential role in the regulation of cell proliferation, differentiation, migration and apoptosis, and in the regulation of embryonic development. Required for normal embryonic patterning, limb bud development, lung morphogenesis, osteogenesis and skin development. Plays an essential role in the regulation of osteoblast differentiation, proliferation and apoptosis, and is required for normal skeleton development. Promotes cell proliferation in keratinocytes and immature osteoblasts, but promotes apoptosis in differentiated osteoblasts. Phosphorylates PLCG1, FRS2 and PAK4. Ligand binding leads to the activation of several signaling cascades. Activation of PLCG1 leads to the production of the cellular signaling molecules diacylglycerol and inositol 1,4,5-trisphosphate. Phosphorylation of FRS2 triggers recruitment of GRB2, GAB1, PIK3R1 and SOS1, and mediates activation of RAS, MAPK1/ERK2, MAPK3/ERK1 and the MAP kinase signaling pathway, as well as of the AKT1 signaling pathway. FGFR2 signaling is down-regulated by ubiquitination, internalization and degradation. Mutations that lead to constitutive kinase activation or impair normal FGFR2 maturation, internalization and degradation lead to aberrant signaling. Over-expressed FGFR2 promotes activation of STAT1. The polypeptide is Fibroblast growth factor receptor 2 (fgfr2) (Xenopus laevis (African clawed frog)).